Reading from the N-terminus, the 967-residue chain is Translation initiation factor IF-2 (967 aa).

Disordered regions lie at residues 201-320 and 349-382; these read KPIV…PGFV and LQGK…ELEA. The segment covering 233–248 has biased composition (polar residues); the sequence is TGPTFSGQTIDLSQFN. A compositionally biased stretch (low complexity) spans 256–272; it reads PNKGGAKPAGAGNNNNN. The span at 354–363 shows a compositional bias: basic residues; that stretch reads NKSKAAKYRR. The span at 364–382 shows a compositional bias: basic and acidic residues; the sequence is DKRDTHRQKSDDEQRELEA. The tr-type G domain maps to 465–635; sequence HRAPIVTVMG…LLEAEVLDLK (171 aa). Residues 474 to 481 are G1; the sequence is GHVDHGKT. GTP is bound at residue 474–481; that stretch reads GHVDHGKT. Residues 499-503 form a G2 region; sequence GITQH. A G3 region spans residues 521–524; sequence DTPG. Residues 521–525 and 575–578 contribute to the GTP site; these read DTPGH and NKVD. The tract at residues 575–578 is G4; it reads NKVD. The segment at 611-613 is G5; that stretch reads SAK.

This sequence belongs to the TRAFAC class translation factor GTPase superfamily. Classic translation factor GTPase family. IF-2 subfamily.

The protein resides in the cytoplasm. Functionally, one of the essential components for the initiation of protein synthesis. Protects formylmethionyl-tRNA from spontaneous hydrolysis and promotes its binding to the 30S ribosomal subunits. Also involved in the hydrolysis of GTP during the formation of the 70S ribosomal complex. The protein is Translation initiation factor IF-2 of Flavobacterium psychrophilum (strain ATCC 49511 / DSM 21280 / CIP 103535 / JIP02/86).